The following is a 222-amino-acid chain: UPF0128 protein TK2294 (222 aa).

Belongs to the UPF0128 family.

The sequence is that of UPF0128 protein TK2294 from Thermococcus kodakarensis (strain ATCC BAA-918 / JCM 12380 / KOD1) (Pyrococcus kodakaraensis (strain KOD1)).